The primary structure comprises 446 residues: NAD(P)H sulfur oxidoreductase (CoA-dependent) (446 aa).

17–18 (AA) contacts FAD. Arginine 28 serves as a coordination point for CoA. FAD-binding positions include 39-40 (EA) and 46-48 (HAP). Residues 45-49 (SHAPC), 66-67 (HY), and arginine 76 each bind CoA. Cysteine 49 (redox-active) is an active-site residue. FAD-binding residues include valine 86, aspartate 284, and alanine 302. CoA is bound by residues asparagine 306 and lysine 362. An FAD-binding site is contributed by tyrosine 426. Positions 434 and 442 each coordinate CoA.

The protein belongs to the class-III pyridine nucleotide-disulfide oxidoreductase family. The cofactor is FAD.

The catalysed reaction is hydrogen sulfide + NADP(+) = sulfur + NADPH. It catalyses the reaction hydrogen sulfide + NAD(+) = sulfur + NADH. Catalyzes the CoA-dependent reduction of elemental sulfur (S(0)) to produce hydrogen sulfide. The protein is NAD(P)H sulfur oxidoreductase (CoA-dependent) of Pyrococcus abyssi (strain GE5 / Orsay).